Here is a 155-residue protein sequence, read N- to C-terminus: Protein-export protein SecB (155 aa).

This sequence belongs to the SecB family. Homotetramer, a dimer of dimers. One homotetramer interacts with 1 SecA dimer.

The protein resides in the cytoplasm. One of the proteins required for the normal export of preproteins out of the cell cytoplasm. It is a molecular chaperone that binds to a subset of precursor proteins, maintaining them in a translocation-competent state. It also specifically binds to its receptor SecA. The polypeptide is Protein-export protein SecB (Escherichia coli O139:H28 (strain E24377A / ETEC)).